A 186-amino-acid chain; its full sequence is uncharacterized protein (186 aa).

One can recognise a Macro domain in the interval 1–181 (MVSFSYKGNL…TFVSLASDFL (181 aa)).

It belongs to the MacroD-type family.

This is an uncharacterized protein from Thermoplasma volcanium (strain ATCC 51530 / DSM 4299 / JCM 9571 / NBRC 15438 / GSS1).